The chain runs to 714 residues: MKDVGSLTEAEAANELMRLAKQIAHHNKLYHAEDSPEISDADYDALVRRNTAIEEAFPHLIRADSPNRLVGAAVEASPLAKVTHAQRMMSLDNAFAAEDVEEFAARVRRFLNLDEGEPLAFTAEDKIDGLSCSLRYEKGVLVQAATRGDGTVGEDVTPNVRTIADIPQNLKGDIPDIFEIRGEVYMAKADFAALNARLLAEADDPDKARQFANPRNAAAGSLRQKDASVTASRPLRFLAHGWGEVSALPADTQYAVMKAIESWGVPVSPLLKRCDGVADLLDHYRMIEAERAELPYDIDGVVYKVDRLDWQARLGFVARAPRWAIAHKFPAERAQTTLEAIDIQVGRTGKLTPVGRLTPVTVGGVVVSNVTLHNRDEIARLGVRPGDRIIVQRAGDVIPQVVENLTRDEPREPYVFPDHCPVCGSEAVAEDGEVDVRCTGGLICNAQKFERLRHFVSRGALDIEGLGEKSIAEFLELGWLEKGPADIFRLKSHREELLAREGWKERSVDNLLAAIEAKRQPDAARLLFGLGIRHVGAVTARDLLKGIGDIARLPGKAAELRAWVEANPRIEGESEGKYAARRLEAIKAILDVRADGIGPAVAEALGDFFHEPHNRVLWDDLLSEVSPPPYVVETRDSEVSGKTVVFTGKLETMSRDEAKAQAEALGAKAAGSVSAKTDLVVAGPGAGSKLKQAASLGIRVIDEAEWAAIVAAAG.

NAD(+) contacts are provided by residues 40–44 (DADYD), 90–91 (SL), and Glu-124. The active-site N6-AMP-lysine intermediate is Lys-126. NAD(+) contacts are provided by Arg-147, Glu-183, Lys-304, and Lys-328. Residues Cys-420, Cys-423, Cys-438, and Cys-444 each coordinate Zn(2+). Positions 634–714 (TRDSEVSGKT…EWAAIVAAAG (81 aa)) constitute a BRCT domain.

It belongs to the NAD-dependent DNA ligase family. LigA subfamily. The cofactor is Mg(2+). Requires Mn(2+) as cofactor.

The enzyme catalyses NAD(+) + (deoxyribonucleotide)n-3'-hydroxyl + 5'-phospho-(deoxyribonucleotide)m = (deoxyribonucleotide)n+m + AMP + beta-nicotinamide D-nucleotide.. Its function is as follows. DNA ligase that catalyzes the formation of phosphodiester linkages between 5'-phosphoryl and 3'-hydroxyl groups in double-stranded DNA using NAD as a coenzyme and as the energy source for the reaction. It is essential for DNA replication and repair of damaged DNA. The protein is DNA ligase of Sphingopyxis alaskensis (strain DSM 13593 / LMG 18877 / RB2256) (Sphingomonas alaskensis).